We begin with the raw amino-acid sequence, 105 residues long: Met repressor (105 aa).

The protein belongs to the MetJ family. Homodimer.

It localises to the cytoplasm. Its function is as follows. This regulatory protein, when combined with SAM (S-adenosylmethionine) represses the expression of the methionine regulon and of enzymes involved in SAM synthesis. This Yersinia pestis bv. Antiqua (strain Antiqua) protein is Met repressor.